Reading from the N-terminus, the 313-residue chain is 2-oxoglutarate-dependent dioxygenase eupC (313 aa).

Positions 187-284 (PSIPMRFLHY…LNAKALDGSG (98 aa)) constitute a Fe2OG dioxygenase domain. 3 residues coordinate Fe cation: His-212, Asp-214, and His-263. Residue Lys-274 participates in 2-oxoglutarate binding.

This sequence belongs to the iron/ascorbate-dependent oxidoreductase family. The cofactor is Fe(2+).

The protein operates within secondary metabolite biosynthesis; terpenoid biosynthesis. 2-oxoglutarate-dependent dioxygenase; part of the gene cluster that mediates the biosynthesis of eupenifeldin, a bistropolone meroterpenoid that acts as an antitumor agent. The first step of eupenifeldin biosynthesis is the biosynthesis of 3-methylorcinaldehyde performed by the non-reducing polyketide synthase eupA. Oxidative dearomatization of 3-methylorcinaldehyde likely catalyzed by the FAD-dependent monooxygenase eupB is followed by oxidative ring expansion by the 2-oxoglutarate-dependent dioxygenase eupC to provide the first tropolone metabolite, tropolone stipitaldehyde. In parallel, generation of sesquiterpene alpha-humulene from farnesylpyrophosphate (FPP) is catalyzed by the terpene cyclase eupE. The cytochrome P450 monooxygenase eupD then hydroxylates humulene to humulenol. The putative Diels-Alderase eupF probably catalyzes the formation of the tropolone-humulene skeleton by linking humulenol and the polyketide moiety. The short-chain dehydrogenase/reductase eupG and the flavin-dependent monooxygenase eupH are also essential for eupenifeldin biosynthesis and are likely the additional decorating enzymes of the tropolone-humulene skeleton to produce final eupenifeldin or derivatives. The polypeptide is 2-oxoglutarate-dependent dioxygenase eupC (Phoma sp).